We begin with the raw amino-acid sequence, 711 residues long: Polyribonucleotide nucleotidyltransferase (711 aa).

Residues Asp-491 and Asp-497 each contribute to the Mg(2+) site. The KH domain occupies 559–618; that stretch reads PRLITIKINPEKIRDVIGKGGAVIRALTEETGTQIDISDEGVVTIASVDAAAGQEAKRRI. Positions 628-696 constitute an S1 motif domain; sequence GKIYEGTVLK…DRGRLKLSMK (69 aa).

It belongs to the polyribonucleotide nucleotidyltransferase family. The cofactor is Mg(2+).

The protein resides in the cytoplasm. It catalyses the reaction RNA(n+1) + phosphate = RNA(n) + a ribonucleoside 5'-diphosphate. Functionally, involved in mRNA degradation. Catalyzes the phosphorolysis of single-stranded polyribonucleotides processively in the 3'- to 5'-direction. This Janthinobacterium sp. (strain Marseille) (Minibacterium massiliensis) protein is Polyribonucleotide nucleotidyltransferase.